A 404-amino-acid chain; its full sequence is RNA exonuclease 3 (404 aa).

A compositionally biased stretch (polar residues) spans 1–17 (MNNNAQNKRSLDDSNGN). Residues 1–29 (MNNNAQNKRSLDDSNGNDTKRPKQEDPKY) are disordered. Over residues 18 to 28 (DTKRPKQEDPK) the composition is skewed to basic and acidic residues. Residues 241-389 (VLGIDCEMGF…EDSIAAIDIV (149 aa)) enclose the Exonuclease domain.

Belongs to the REXO1/REXO3 family.

It is found in the cytoplasm. The protein resides in the nucleus. 3' to 5' exoribonuclease required for proper 3' end maturation of MRP RNA and of the U5L snRNA. The sequence is that of RNA exonuclease 3 (REX3) from Candida albicans (strain SC5314 / ATCC MYA-2876) (Yeast).